A 446-amino-acid polypeptide reads, in one-letter code: Alpha-1,6-mannosyl-glycoprotein 2-beta-N-acetylglucosaminyltransferase (446 aa).

Residues methionine 1 to lysine 9 are Cytoplasmic-facing. The chain crosses the membrane as a helical; Signal-anchor for type II membrane protein span at residues valine 10–glycine 29. The Lumenal segment spans residues arginine 30–glutamine 446. N-linked (GlcNAc...) asparagine glycosylation is found at asparagine 69 and asparagine 86. Substrate contacts are provided by residues glutamine 123 to arginine 127 and aspartate 154. Cysteine 196 and cysteine 210 are oxidised to a cystine. A substrate-binding site is contributed by glutamine 229 to histidine 233. Aspartate 261 is a Mn(2+) binding site. Cysteine 283 and cysteine 286 are oxidised to a cystine. Arginine 298 provides a ligand contact to substrate. Cystine bridges form between cysteine 334/cysteine 357, cysteine 339/cysteine 439, and cysteine 378/cysteine 386. Histidine 374 serves as a coordination point for Mn(2+).

It belongs to the glycosyltransferase 16 (GT16) protein family. As to quaternary structure, homodimer. It depends on Mn(2+) as a cofactor.

It localises to the golgi apparatus membrane. It catalyses the reaction an N(4)-{beta-D-GlcNAc-(1-&gt;2)-alpha-D-Man-(1-&gt;3)-[alpha-D-Man-(1-&gt;6)]-beta-D-Man-(1-&gt;4)-beta-D-GlcNAc-(1-&gt;4)-beta-D-GlcNAc}-L-asparaginyl-[protein] + UDP-N-acetyl-alpha-D-glucosamine = N(4)-{beta-D-GlcNAc-(1-&gt;2)-alpha-D-Man-(1-&gt;3)-[beta-D-GlcNAc-(1-&gt;2)-alpha-D-Man-(1-&gt;6)]-beta-D-Man-(1-&gt;4)-beta-D-GlcNAc-(1-&gt;4)-beta-D-GlcNAc}-L-asparaginyl-[protein] + UDP + H(+). Its pathway is protein modification; protein glycosylation. In terms of biological role, plays an essential role in protein N-glycosylation. Catalyzes the transfer of N-acetylglucosamine (GlcNAc) onto the free terminal mannose moiety in the core structure of the nascent N-linked glycan chain, giving rise to the second branch in complex glycans. This Sus scrofa (Pig) protein is Alpha-1,6-mannosyl-glycoprotein 2-beta-N-acetylglucosaminyltransferase (MGAT2).